Here is a 540-residue protein sequence, read N- to C-terminus: MYYLNKMLEYNKENGIIINKYIRKTIQKQIRIHNKYIYRYDRVTQAIEWIEDNFYLTTGNLMKIELLPTQRWWYELMLGYDMIDEKGVQVNLINEIFLNLGRGSGKSSLMATRVLNWMILGGQYGGESLVIAYDNTQARHVFDQVRNQTEASDTLRVYNENKIFKSTKQGLEFTSFKTTFKKQTNDTLRAQGGNSSLNIFDEVHTYGEDITESVNKGSRQKQDNWQSIYITSGGLKRDGLYDKLVERFKSEEEFYNDRSFGLLYMLENHEQVKDKKNWTMALPLIGSVPKWSGVIEEYELAQGDPALQNKFLAFNMGLPMQDTAYYFTPQDTKLTDFNLSVFNKNRTYVGIDLSLIGDLTAVSFVCELEGKTYSHTLTFSVRSQYEQLDTEQQELWTEFVDRGELILLDTEYINVNDLIPHINDFRTKTGCRLRKIGYDPARYEILKGLIERYFFDKDGDNQRAIRQGFSMNDYIKLLKSKLAENKLIHNQKVMQWALNNTAVKIGQSGDYMYTKKLEKDKIDPTVALTMALEMAVSDEV.

Mn(2+) contacts are provided by D352, D424, and D523.

The protein belongs to the skunavirus terminase large subunit family. As to quaternary structure, interacts with the terminase small subunit; the active complex is probably heterooligomeric. Mn(2+) serves as cofactor. Mg(2+) is required as a cofactor.

Its function is as follows. Probable terminase large subunit. The terminase large subunit acts as an ATP driven molecular motor necessary for viral DNA translocation into empty capsids and as an endonuclease that cuts the viral genome to initiate and to end a packaging reaction. The terminase lies at a unique vertex of the procapsid and is composed of two subunits, a small terminase subunit involved in viral DNA recognition (packaging sequence), and a large terminase subunit possessing endonucleolytic and ATPase activities. Both terminase subunits heterooligomerize and are docked on the portal protein to form the packaging machine. The terminase large subunit exhibits endonuclease activity and cleaves the viral genome concatemer. The sequence is that of Terminase large subunit from Lactococcus lactis (Lactococcus lactis bacteriophage p2).